Consider the following 520-residue polypeptide: AarF domain-containing protein kinase 1 (520 aa).

The region spanning 148–455 is the Protein kinase domain; that stretch reads EFEKTPLGAA…GTHSSSSAFF (308 aa). ATP is bound by residues 154-162 and Lys-176; that span reads LGAASLAQV. The active-site Proton acceptor is the Asp-308.

Belongs to the protein kinase superfamily. ADCK protein kinase family.

The protein localises to the mitochondrion. In terms of biological role, appears to be essential for maintaining mitochondrial cristae formation and mitochondrial function by acting via YME1L1 in a kinase-independent manner to regulate essential mitochondrial structural proteins OPA1 and IMMT. The action of this enzyme is not yet clear. It is not known if it has protein kinase activity and what type of substrate it would phosphorylate (Ser, Thr or Tyr). The sequence is that of AarF domain-containing protein kinase 1 (adck1) from Xenopus laevis (African clawed frog).